The sequence spans 71 residues: Conotoxin Lt11.3 (71 aa).

A signal peptide spans M1–A26. 4 disulfides stabilise this stretch: C27–C41, C34–C46, C40–C50, and C45–C54. The residue at position 57 (P57) is a Proline amide. Positions T61 to R71 are excised as a propeptide.

It belongs to the conotoxin I2 superfamily. As to expression, expressed by the venom duct.

It is found in the secreted. Probable neurotoxin. This is Conotoxin Lt11.3 from Conus litteratus (Lettered cone).